Consider the following 335-residue polypeptide: Anthranilate phosphoribosyltransferase (335 aa).

Residues Gly-79, 82–83, Thr-87, 89–92, 107–115, and Ser-119 contribute to the 5-phospho-alpha-D-ribose 1-diphosphate site; these read GD, NIST, and KHGSRSVSS. Gly-79 provides a ligand contact to anthranilate. Ser-91 lines the Mg(2+) pocket. Residue Arg-165 coordinates anthranilate. The Mg(2+) site is built by Asp-223 and Glu-224.

Belongs to the anthranilate phosphoribosyltransferase family. In terms of assembly, homodimer. The cofactor is Mg(2+).

The catalysed reaction is N-(5-phospho-beta-D-ribosyl)anthranilate + diphosphate = 5-phospho-alpha-D-ribose 1-diphosphate + anthranilate. It participates in amino-acid biosynthesis; L-tryptophan biosynthesis; L-tryptophan from chorismate: step 2/5. Its function is as follows. Catalyzes the transfer of the phosphoribosyl group of 5-phosphorylribose-1-pyrophosphate (PRPP) to anthranilate to yield N-(5'-phosphoribosyl)-anthranilate (PRA). In Helicobacter pylori (strain Shi470), this protein is Anthranilate phosphoribosyltransferase.